The sequence spans 414 residues: uncharacterized protein (414 aa).

An N-terminal signal peptide occupies residues 1 to 16; the sequence is MRVILLLAFLISLTEC. The 40-residue stretch at 20-59 folds into the Myb-like 1 domain; that stretch reads SEDLALYDLVEEVGVNFYEWFDIPRDASSNQVKKAYRKLT. One can recognise a J domain in the interval 35–99; it reads NFYEWFDIPR…ELREKYDNVL (65 aa). A helical transmembrane segment spans residues 125–145; the sequence is ILVLLFIGTIAHYLMMWAAYF. The segment at 211–234 is disordered; sequence MTPKEVEPEEPTEEELAQQRRQQR. Positions 217-226 are enriched in acidic residues; sequence EPEEPTEEEL. The region spanning 274–320 is the Myb-like 2 domain; sequence AQKQSGATWTPDELASLVRLSTEKYPAGTPNRWEQMGRVLNRSAEDV. The region spanning 352-407 is the SANT domain; the sequence is KSEDDWSQAEQKAFETALQKYPKGTDERWERISEEIGSKTKKQVMVRFKQLAEMIR.

Its subcellular location is the nucleus membrane. This is an uncharacterized protein from Caenorhabditis elegans.